Consider the following 233-residue polypeptide: MPKLVFARHGESEWNLANLFTGWADVDLSENGTKQAIEAGKLIKEAGIEFDIAYTSVLKRAIKTTNLALEFSDQLWVPVVKSWRLNERHYGGLTGLNKADAAAKHGDEQVHIWRRSYDVLPPAMDHDDKYTAHGDRRYAGLEDSLIPDAENLKVTLERALPFWEDQIAPALKEGKNVFVGAHGNSIRALVKQIKKLSDDEIMDVEIPNFPPLVFEFDDNLNVQNEYYLAPKKA.

Residues 8 to 15, 21 to 22, Arg-60, 87 to 90, Lys-98, 114 to 115, and 183 to 184 each bind substrate; these read RHGESEWN, TG, ERHY, RR, and GN. His-9 (tele-phosphohistidine intermediate) is an active-site residue. Catalysis depends on Glu-87, which acts as the Proton donor/acceptor.

The protein belongs to the phosphoglycerate mutase family. BPG-dependent PGAM subfamily.

It carries out the reaction (2R)-2-phosphoglycerate = (2R)-3-phosphoglycerate. It functions in the pathway carbohydrate degradation; glycolysis; pyruvate from D-glyceraldehyde 3-phosphate: step 3/5. Functionally, catalyzes the interconversion of 2-phosphoglycerate and 3-phosphoglycerate. In Lactococcus lactis subsp. cremoris (strain MG1363), this protein is 2,3-bisphosphoglycerate-dependent phosphoglycerate mutase.